The sequence spans 236 residues: uncharacterized protein (236 aa).

This sequence to E.coli YfjP and YkfA.

This is an uncharacterized protein from Escherichia coli (strain K12).